A 343-amino-acid chain; its full sequence is Outer envelope pore protein 37, chloroplastic (343 aa).

Composition is skewed to polar residues over residues 1-11 and 23-43; these read MADPSSQNPNL and THQI…PCST. Residues 1–43 form a disordered region; the sequence is MADPSSQNPNLATPPPPSSPSPTHQIQSGTSELSPPSRPPCST. Residues 1–73 constitute a chloroplast transit peptide; it reads MADPSSQNPN…DSLLFLNKVS (73 aa). Residues 74–76 are Cytoplasmic-facing; that stretch reads CKL. The chain crosses the membrane as a beta stranded span at residues 77–86; it reads FDNLAKLKLS. At 87–103 the chain is on the chloroplast intermembrane side; the sequence is FQNNSQREISQPQVSFT. Residues 104–113 form a beta stranded membrane-spanning segment; the sequence is SKHVSVLYDV. The Cytoplasmic segment spans residues 114-129; sequence EEKNTFIKSTLDVHPR. The chain crosses the membrane as a beta stranded span at residues 130–137; it reads LQLRALHN. At 138–154 the chain is on the chloroplast intermembrane side; it reads VKAQQGEVAMEANLTEP. The beta stranded transmembrane segment at 155-164 threads the bilayer; the sequence is GYSLELSSPV. The Cytoplasmic portion of the chain corresponds to 165-169; sequence PIGYP. Residues 170–178 form a beta stranded membrane-spanning segment; it reads RATLKFPLG. The Chloroplast intermembrane segment spans residues 179 to 219; it reads EISLQEKDEEEEEKQKRTLSVNGILKRQVMNGVCTALYTDE. Residues 220 to 228 form a beta stranded membrane-spanning segment; the sequence is ELRLRYAYK. The Cytoplasmic segment spans residues 229-230; it reads DD. The beta stranded transmembrane segment at 231-240 threads the bilayer; the sequence is ALSFIPSISL. A topological domain (chloroplast intermembrane) is located at residue Pro241. The beta stranded transmembrane segment at 242–250 threads the bilayer; it reads SNAASFAFK. Over 251–257 the chain is Cytoplasmic; that stretch reads RRFSPSD. A beta stranded membrane pass occupies residues 258 to 267; it reads KLSYWYNFDS. Over 268 to 269 the chain is Chloroplast intermembrane; that stretch reads NM. Residues 270 to 279 traverse the membrane as a beta stranded segment; the sequence is WSAVYKRTYG. Topologically, residues 280–286 are cytoplasmic; that stretch reads KDYKLKA. A beta stranded transmembrane segment spans residues 287-296; the sequence is GYDSDVRLGW. At 297–316 the chain is on the chloroplast intermembrane side; the sequence is ASLWVGDEAGKVKTTPMKMK. A beta stranded transmembrane segment spans residues 317–326; it reads VQFMLQVPQD. Residues 327–343 are Cytoplasmic-facing; sequence DIKSSVLMFRVKKRWDI.

This sequence belongs to the plastid outer envelope porin OEP37 (TC 1.B.47) family. Forms an hourglass-shaped multimeric complex. Ubiquitously expressed at low levels. Mostly present in cotyledons, and accumulates in seedlings and embryos.

Its subcellular location is the plastid. It is found in the chloroplast outer membrane. Functionally, voltage-dependent peptide-sensitive high conductance rectifying cation channel with a strong affinity for TIC32 that is imported into the chloroplast. Conductance is pH-dependent decreasing with decreasing pH values. The protein is Outer envelope pore protein 37, chloroplastic (OEP37) of Arabidopsis thaliana (Mouse-ear cress).